A 159-amino-acid chain; its full sequence is Ribosome maturation factor RimP (159 aa).

This sequence belongs to the RimP family.

The protein localises to the cytoplasm. In terms of biological role, required for maturation of 30S ribosomal subunits. The polypeptide is Ribosome maturation factor RimP (Streptococcus pneumoniae serotype 19F (strain G54)).